The chain runs to 132 residues: Insulin-like 3 (132 aa).

The first 21 residues, 1 to 21 (MDRRPLTWALVLLGPALAIAL), serve as a signal peptide directing secretion. At Q27 the chain carries Pyrrolidone carboxylic acid. 3 disulfide bridges follow: C34–C117, C46–C130, and C116–C121. A propeptide spans 67 to 104 (LLRWLEGQHLLHGLMASGDPVLVLAPQPLPQASRHHHH) (c peptide like).

This sequence belongs to the insulin family. In terms of assembly, heterodimer of a B chain and an A chain linked by two disulfide bonds. 20% of B chains include an extra N-terminal pentapeptide. In terms of tissue distribution, expressed exclusively in Leydig cells of the testis.

The protein localises to the secreted. Its function is as follows. Seems to play a role in testicular function. May be a trophic hormone with a role in testicular descent in fetal life. Is a ligand for LGR8 receptor. This is Insulin-like 3 (INSL3) from Bos taurus (Bovine).